The sequence spans 463 residues: RuvB-like 2 (463 aa).

The residue at position 2 (A2) is an N-acetylalanine. Residue K9 forms a Glycyl lysine isopeptide (Lys-Gly) (interchain with G-Cter in SUMO2) linkage. 77-84 (GQPGTGKT) is a binding site for ATP. Residue S437 is modified to Phosphoserine. Residues K444 and K456 each participate in a glycyl lysine isopeptide (Lys-Gly) (interchain with G-Cter in SUMO2) cross-link.

The protein belongs to the RuvB family. As to quaternary structure, forms homohexameric rings. Can form a dodecamer with RUVBL1 made of two stacked hexameric rings; however, even though RUVBL1 and RUVBL2 are present in equimolar ratio, the oligomeric status of each hexamer is not known. Oligomerization may regulate binding to nucleic acids and conversely, binding to nucleic acids may affect the dodecameric assembly. Interaction of the complex with DHX34 results in conformational changes of the N-terminus of the RUVBL2 subunits, resulting in loss of nucleotide binding ability and ATP hydrolysis of the complex. Interacts with the transcriptional activation domain of MYC. Interacts with ATF2. Component of the RNA polymerase II holoenzyme complex. May also act to bridge the LEF1/TCF1-CTNNB1 complex and TBP. Component of the NuA4 histone acetyltransferase complex which contains the catalytic subunit KAT5/TIP60 and the subunits EP400, TRRAP/PAF400, BRD8/SMAP, EPC1, DMAP1/DNMAP1, RUVBL1/TIP49, RUVBL2, ING3, actin, ACTL6A/BAF53A, MORF4L1/MRG15, MORF4L2/MRGX, MRGBP, YEATS4/GAS41, VPS72/YL1 and MEAF6. The NuA4 complex interacts with MYC and the adenovirus E1A protein. RUVBL2 interacts with EP400. Component of a NuA4-related complex which contains EP400, TRRAP/PAF400, SRCAP, BRD8/SMAP, EPC1, DMAP1/DNMAP1, RUVBL1/TIP49, RUVBL2, actin, ACTL6A/BAF53A, VPS72 and YEATS4/GAS41. Interacts with NPAT. Component of the chromatin-remodeling INO80 complex; specifically part of a complex module associated with the helicase ATP-binding and the helicase C-terminal domain of INO80. Component of some MLL1/MLL complex, at least composed of the core components KMT2A/MLL1, ASH2L, HCFC1/HCF1, WDR5 and RBBP5, as well as the facultative components BACC1, CHD8, E2F6, HSP70, INO80C, KANSL1, LAS1L, MAX, MCRS1, MGA, MYST1/MOF, PELP1, PHF20, PRP31, RING2, RUVB1/TIP49A, RUVB2/TIP49B, SENP3, TAF1, TAF4, TAF6, TAF7, TAF9 and TEX10. Interacts with IGHMBP2. Interacts with TELO2. Interacts with HINT1. Component of a SWR1-like complex. Component of the R2TP complex composed at least of RUVBL1, RUVBL2, RPAP3 and PIHD1. Component of the PAQosome complex which is responsible for the biogenesis of several protein complexes and which consists of R2TP complex members RUVBL1, RUVBL2, RPAP3 and PIH1D1, URI complex members PFDN2, PFDN6, PDRG1, UXT and URI1 as well as ASDURF, POLR2E and DNAAF10/WDR92. Interacts with ITFG1. Interacts with ZMYND10. Interacts with WAC; WAC positively regulates MTOR activity by promoting the assembly of the TTT complex composed of TELO2, TTI1 and TTI2 and the RUVBL complex composed of RUVBL1 and RUVBL2 into the TTT-RUVBL complex which leads to the dimerization of the mTORC1 complex and its subsequent activation. Forms a complex with APPL1 and APPL2. Interacts with ZNHIT2 (via HIT-type zinc finger) in the presence of ATP or ADP; shows a stronger interaction in the presence of ADP. The RUVBL1/RUVBL2 complex interacts with ZNHIT1 (via HIT-type zinc finger), ZNHIT3 (via HIT-type zinc finger), ZNHIT6 (via HIT-type zinc finger) and DDX59/ZNHIT5 (via HIT-type zinc finger) in the presence of ADP. Interacts with NOPCHAP1; the interaction is direct and disrupted upon ATP binding. Interacts with SMG1. (Microbial infection) Interacts with Mumps L polymerase; this interaction regulates the viral transcription. As to expression, ubiquitously expressed. Highly expressed in testis and thymus.

Its subcellular location is the nucleus matrix. The protein resides in the nucleus. The protein localises to the nucleoplasm. It localises to the cytoplasm. It is found in the membrane. Its subcellular location is the dynein axonemal particle. The enzyme catalyses ATP + H2O = ADP + phosphate + H(+). Functionally, possesses single-stranded DNA-stimulated ATPase and ATP-dependent DNA helicase (5' to 3') activity; hexamerization is thought to be critical for ATP hydrolysis and adjacent subunits in the ring-like structure contribute to the ATPase activity. Component of the NuA4 histone acetyltransferase complex which is involved in transcriptional activation of select genes principally by acetylation of nucleosomal histones H4 and H2A. This modification may both alter nucleosome -DNA interactions and promote interaction of the modified histones with other proteins which positively regulate transcription. This complex may be required for the activation of transcriptional programs associated with oncogene and proto-oncogene mediated growth induction, tumor suppressor mediated growth arrest and replicative senescence, apoptosis, and DNA repair. The NuA4 complex ATPase and helicase activities seem to be, at least in part, contributed by the association of RUVBL1 and RUVBL2 with EP400. NuA4 may also play a direct role in DNA repair when recruited to sites of DNA damage. Component of a SWR1-like complex that specifically mediates the removal of histone H2A.Z/H2AZ1 from the nucleosome. Proposed core component of the chromatin remodeling INO80 complex which exhibits DNA- and nucleosome-activated ATPase activity and catalyzes ATP-dependent nucleosome sliding. Plays an essential role in oncogenic transformation by MYC and also modulates transcriptional activation by the LEF1/TCF1-CTNNB1 complex. May also inhibit the transcriptional activity of ATF2. Involved in the endoplasmic reticulum (ER)-associated degradation (ERAD) pathway where it negatively regulates expression of ER stress response genes. May play a role in regulating the composition of the U5 snRNP complex. The chain is RuvB-like 2 (RUVBL2) from Homo sapiens (Human).